The primary structure comprises 144 residues: Large ribosomal subunit protein uL15 (144 aa).

The interval M1–G53 is disordered. Over residues R21 to G31 the composition is skewed to gly residues.

Belongs to the universal ribosomal protein uL15 family. Part of the 50S ribosomal subunit.

Its function is as follows. Binds to the 23S rRNA. This is Large ribosomal subunit protein uL15 from Haemophilus influenzae (strain ATCC 51907 / DSM 11121 / KW20 / Rd).